A 920-amino-acid chain; its full sequence is Nonribosomal peptide synthetase atrA (920 aa).

Positions 13–428 are adenylation (A) domain; that stretch reads AAAQERCGRV…AGRLKETMII (416 aa). The Carrier domain occupies 558–637; the sequence is PPKDELERSL…ELSAALHDLQ (80 aa). Serine 595 is subject to O-(pantetheine 4'-phosphoryl)serine. The segment at 656–905 is thioesterase (TE) domain; sequence PLWLIHPGVG…YTMLAPEHVF (250 aa).

This sequence belongs to the NRP synthetase family.

It catalyses the reaction 2 3-(4-hydroxyphenyl)pyruvate + 2 ATP = atromentin + 2 AMP + 2 diphosphate + H(+). Functionally, nonribosomal peptide synthetase that mediates the biosynthesis of atromentin. AtrA first activates 4-hydroxyphenylpyruvate (HPPA) through its A domain to AMP-HPPA. The HPPA unit is then loaded to the T domain and eventually transferred to the TE domain. Another HPPA unit is then loaded onto the T domain. The TE domain then catalyzes the condensation of the two HPPA units and the release of atromentin via cyclization. The protein is Nonribosomal peptide synthetase atrA of Aspergillus terreus (strain NIH 2624 / FGSC A1156).